A 238-amino-acid polypeptide reads, in one-letter code: Ribonuclease 3 (238 aa).

The RNase III domain maps to 11–136 (RARLEAAIGY…LIAAIYLDGG (126 aa)). Residue E49 participates in Mg(2+) binding. D53 is an active-site residue. 2 residues coordinate Mg(2+): D122 and E125. Residue E125 is part of the active site. The DRBM domain maps to 161 to 230 (DAKTELQEWA…AMKLLEREGV (70 aa)). The span at 180–193 (YRTEDRSGPDHDPR) shows a compositional bias: basic and acidic residues. The segment at 180 to 215 (YRTEDRSGPDHDPRFTVTVEVDGIDPETGVDRSKRG) is disordered.

It belongs to the ribonuclease III family. Homodimer. Mg(2+) is required as a cofactor.

The protein localises to the cytoplasm. The catalysed reaction is Endonucleolytic cleavage to 5'-phosphomonoester.. In terms of biological role, digests double-stranded RNA. Involved in the processing of primary rRNA transcript to yield the immediate precursors to the large and small rRNAs (23S and 16S). Processes some mRNAs, and tRNAs when they are encoded in the rRNA operon. Processes pre-crRNA and tracrRNA of type II CRISPR loci if present in the organism. The protein is Ribonuclease 3 of Sinorhizobium medicae (strain WSM419) (Ensifer medicae).